A 105-amino-acid polypeptide reads, in one-letter code: ATP synthase subunit c (105 aa).

The next 3 membrane-spanning stretches (helical) occupy residues 3–23, 32–52, and 78–98; these read FLSLFFLALAGVAFAHDGGMG, SILGAMIGLGIAAFGGAIGMG, and VAMAMIEAQVIYTLVFAIIAI.

This sequence belongs to the ATPase C chain family. As to quaternary structure, F-type ATPases have 2 components, F(1) - the catalytic core - and F(0) - the membrane proton channel. F(1) has five subunits: alpha(3), beta(3), gamma(1), delta(1), epsilon(1). F(0) has three main subunits: a(1), b(2) and c(10-14). The alpha and beta chains form an alternating ring which encloses part of the gamma chain. F(1) is attached to F(0) by a central stalk formed by the gamma and epsilon chains, while a peripheral stalk is formed by the delta and b chains.

The protein localises to the cell inner membrane. In terms of biological role, f(1)F(0) ATP synthase produces ATP from ADP in the presence of a proton or sodium gradient. F-type ATPases consist of two structural domains, F(1) containing the extramembraneous catalytic core and F(0) containing the membrane proton channel, linked together by a central stalk and a peripheral stalk. During catalysis, ATP synthesis in the catalytic domain of F(1) is coupled via a rotary mechanism of the central stalk subunits to proton translocation. Functionally, key component of the F(0) channel; it plays a direct role in translocation across the membrane. A homomeric c-ring of between 10-14 subunits forms the central stalk rotor element with the F(1) delta and epsilon subunits. The chain is ATP synthase subunit c from Helicobacter pylori (strain Shi470).